An 85-amino-acid polypeptide reads, in one-letter code: Cell division topological specificity factor (85 aa).

It belongs to the MinE family.

In terms of biological role, prevents the cell division inhibition by proteins MinC and MinD at internal division sites while permitting inhibition at polar sites. This ensures cell division at the proper site by restricting the formation of a division septum at the midpoint of the long axis of the cell. The chain is Cell division topological specificity factor from Stutzerimonas stutzeri (strain A1501) (Pseudomonas stutzeri).